We begin with the raw amino-acid sequence, 388 residues long: Chorismate synthase (388 aa).

Arginine 39 and arginine 45 together coordinate NADP(+). FMN-binding positions include 132 to 134 (RSS), 251 to 252 (NA), glycine 296, 311 to 315 (KPIPT), and arginine 337.

This sequence belongs to the chorismate synthase family. As to quaternary structure, homotetramer. FMNH2 serves as cofactor.

The catalysed reaction is 5-O-(1-carboxyvinyl)-3-phosphoshikimate = chorismate + phosphate. It participates in metabolic intermediate biosynthesis; chorismate biosynthesis; chorismate from D-erythrose 4-phosphate and phosphoenolpyruvate: step 7/7. Its function is as follows. Catalyzes the anti-1,4-elimination of the C-3 phosphate and the C-6 proR hydrogen from 5-enolpyruvylshikimate-3-phosphate (EPSP) to yield chorismate, which is the branch point compound that serves as the starting substrate for the three terminal pathways of aromatic amino acid biosynthesis. This reaction introduces a second double bond into the aromatic ring system. This Staphylococcus aureus (strain COL) protein is Chorismate synthase.